The sequence spans 888 residues: Autophagy-related protein 9 (888 aa).

The interval 1 to 170 (MASNIFSRIK…PYTTPMGPQP (170 aa)) is disordered. The Cytoplasmic portion of the chain corresponds to 1 to 255 (MASNIFSRIK…CTRKMSGLWN (255 aa)). Residues 13-24 (SGGSQSFYQQLR) show a composition bias toward polar residues. The segment covering 28–38 (DPEYDPGLDEE) has biased composition (acidic residues). Polar residues predominate over residues 123-143 (RATNPGSSRTPASVGPSSART). Residues 256–276 (FAIWLYTFFFIWKCVQYFVEI) traverse the membrane as a helical segment. Topologically, residues 277–422 (RRLTYIRDFY…RLLSQKLRQR (146 aa)) are lumenal. Residues 423 to 443 (FLFAGFLNLLFAPVVLAYVVI) traverse the membrane as a helical segment. Residues 444–511 (VYFFTYYYEY…PKRITEAVAR (68 aa)) are Cytoplasmic-facing. An intramembrane segment occupies 512 to 532 (TIAFMSGAITAILAIGSVLDS). The Cytoplasmic segment spans residues 533-544 (ELFLNFEITKDR). Residues 545–565 (PVIFYLGVFAAIWATTRGMVS) form a helical membrane-spanning segment. Residues 566–611 (EETLVFNPEYALRNVIEYTRYVPDHWKNKLHSSEVKQEFSELYKMK) lie on the Lumenal side of the membrane. A helical transmembrane segment spans residues 612–632 (VVIFLEEMMGIVTTPMLLLFS). Residues 633–642 (LPRCSDQIVD) lie on the Cytoplasmic side of the membrane. Residues 643–663 (FFREFTIHVDGLGYVCSFAVF) lie within the membrane without spanning it. Residues 664 to 888 (DFQKGPGNTG…QRPRRGGGMV (225 aa)) lie on the Cytoplasmic side of the membrane. Disordered regions lie at residues 748–770 (GRTG…PRIG) and 834–866 (EPGG…DPEA).

Belongs to the ATG9 family. Homotrimer; forms a homotrimer with a central pore that forms a path between the two membrane leaflets. In terms of processing, phosphorylated by ATG1. ATG1 phosphorylation is required for ATG18 interaction and preautophagosome elongation.

It localises to the preautophagosomal structure membrane. It is found in the cytoplasmic vesicle membrane. The protein localises to the golgi apparatus membrane. Its subcellular location is the endoplasmic reticulum membrane. The enzyme catalyses a 1,2-diacyl-sn-glycero-3-phosphocholine(in) = a 1,2-diacyl-sn-glycero-3-phosphocholine(out). It carries out the reaction a 1,2-diacyl-sn-glycero-3-phospho-L-serine(in) = a 1,2-diacyl-sn-glycero-3-phospho-L-serine(out). It catalyses the reaction a 1,2-diacyl-sn-glycero-3-phosphoethanolamine(in) = a 1,2-diacyl-sn-glycero-3-phosphoethanolamine(out). The catalysed reaction is a 1,2-diacyl-sn-glycero-3-phospho-(1D-myo-inositol-3-phosphate)(in) = a 1,2-diacyl-sn-glycero-3-phospho-(1D-myo-inositol-3-phosphate)(out). In terms of biological role, phospholipid scramblase involved in autophagy and cytoplasm to vacuole transport (Cvt) vesicle formation. Cycles between the preautophagosomal structure/phagophore assembly site (PAS) and the cytoplasmic vesicle pool and supplies membrane for the growing autophagosome. Lipid scramblase activity plays a key role in preautophagosomal structure/phagophore assembly by distributing the phospholipids that arrive through ATG2 from the cytoplasmic to the luminal leaflet of the bilayer, thereby driving autophagosomal membrane expansion. Required for mitophagy. Also involved in endoplasmic reticulum-specific autophagic process and is essential for the survival of cells subjected to severe ER stress. Different machineries are required for anterograde trafficking to the PAS during either the Cvt pathway or bulk autophagy and for retrograde trafficking. Autophagy is required for proper vegetative growth, asexual/sexual reproduction, and full virulence. Autophagy is particularly involved in the biosynthesis of deoxynivalenol (DON), an important virulence determinant. Required for aerial hyphae development and lipid droplet degradation in response to starvation. This is Autophagy-related protein 9 from Gibberella zeae (strain ATCC MYA-4620 / CBS 123657 / FGSC 9075 / NRRL 31084 / PH-1) (Wheat head blight fungus).